Here is a 235-residue protein sequence, read N- to C-terminus: Large ribosomal subunit protein uL1 (235 aa).

Belongs to the universal ribosomal protein uL1 family. In terms of assembly, part of the 50S ribosomal subunit.

Binds directly to 23S rRNA. The L1 stalk is quite mobile in the ribosome, and is involved in E site tRNA release. In terms of biological role, protein L1 is also a translational repressor protein, it controls the translation of the L11 operon by binding to its mRNA. This chain is Large ribosomal subunit protein uL1, found in Pseudarthrobacter chlorophenolicus (strain ATCC 700700 / DSM 12829 / CIP 107037 / JCM 12360 / KCTC 9906 / NCIMB 13794 / A6) (Arthrobacter chlorophenolicus).